The chain runs to 530 residues: Autoinducer-2 kinase (530 aa).

This sequence belongs to the FGGY kinase family.

It localises to the cytoplasm. The enzyme catalyses (S)-4,5-dihydroxypentane-2,3-dione + ATP = (2S)-2-hydroxy-3,4-dioxopentyl phosphate + ADP + H(+). Functionally, catalyzes the phosphorylation of autoinducer-2 (AI-2) to phospho-AI-2, which subsequently inactivates the transcriptional regulator LsrR and leads to the transcription of the lsr operon. Phosphorylates the ring-open form of (S)-4,5-dihydroxypentane-2,3-dione (DPD), which is the precursor to all AI-2 signaling molecules, at the C5 position. In Enterobacter sp. (strain 638), this protein is Autoinducer-2 kinase.